The primary structure comprises 195 residues: ATP-dependent Clp protease proteolytic subunit (195 aa).

Ser98 (nucleophile) is an active-site residue. His123 is an active-site residue.

Belongs to the peptidase S14 family. As to quaternary structure, fourteen ClpP subunits assemble into 2 heptameric rings which stack back to back to give a disk-like structure with a central cavity, resembling the structure of eukaryotic proteasomes.

It is found in the cytoplasm. It catalyses the reaction Hydrolysis of proteins to small peptides in the presence of ATP and magnesium. alpha-casein is the usual test substrate. In the absence of ATP, only oligopeptides shorter than five residues are hydrolyzed (such as succinyl-Leu-Tyr-|-NHMec, and Leu-Tyr-Leu-|-Tyr-Trp, in which cleavage of the -Tyr-|-Leu- and -Tyr-|-Trp bonds also occurs).. Functionally, cleaves peptides in various proteins in a process that requires ATP hydrolysis. Has a chymotrypsin-like activity. Plays a major role in the degradation of misfolded proteins. In Thermoanaerobacter pseudethanolicus (strain ATCC 33223 / 39E) (Clostridium thermohydrosulfuricum), this protein is ATP-dependent Clp protease proteolytic subunit.